The following is a 520-amino-acid chain: Cytochrome P450 monooxygenase vrtE (520 aa).

A helical transmembrane segment spans residues 16–36 (ALSLLHYVLGAIFLLLLFHML). Asn137 carries N-linked (GlcNAc...) asparagine glycosylation. Residue Cys459 coordinates heme.

This sequence belongs to the cytochrome P450 family. Heme serves as cofactor.

It localises to the membrane. It functions in the pathway secondary metabolite biosynthesis; terpenoid biosynthesis. Cytochrome P450 monooxygenase; part of the gene cluster that mediates the biosynthesis of viridicatumtoxin, a tetracycline-like fungal meroterpenoid with a unique, fused spirobicyclic ring system. The first step of the pathway is the production of the malonamoyl-CoA starter unit for the polyketide synthase vrtA. The aldolase vrtJ may be involved in the synthesis of the malonamate substrate for malonamoyl-CoA synthetase vrtB. The polyketide synthase vrtA then may utilize the malonamoyl-CoA starter unit, followed by sequential condensation of eight malonyl-CoA units to form the polyketide backbone. The cyclization of the last ring could be mediated by the lactamase-like protein vrtG. The proposed post-PKS tailoring steps are a hydroxylation at C5 catalyzed the cytochrome P450 monooxygenase vrtE, a hydroxylation at C12a catalyzed by VrtH and/or VrtI, and an O-methylation by the O-methyltransferase vrtF. VrtC is then proposed to catalyze the transfer of a geranyl group synthesized by vrtD to the aromatic C ring of the tetracyclic polyketide intermediate of viridicatumtoxin to yield previridicatumtoxin. Finally, the cytochrome P450 monooxygenase vrtK catalyzes the spirocyclization of the geranyl moiety of previridicatumtoxin to afford viridicatumtoxin. The polypeptide is Cytochrome P450 monooxygenase vrtE (Penicillium aethiopicum).